The chain runs to 483 residues: Protein nucleotidyltransferase YdiU (483 aa).

Positions 87, 89, 90, 110, 122, 123, 173, and 180 each coordinate ATP. Asp-249 (proton acceptor) is an active-site residue. 2 residues coordinate Mg(2+): Asn-250 and Asp-259. Asp-259 contacts ATP.

This sequence belongs to the SELO family. Mg(2+) serves as cofactor. The cofactor is Mn(2+).

It carries out the reaction L-seryl-[protein] + ATP = 3-O-(5'-adenylyl)-L-seryl-[protein] + diphosphate. The catalysed reaction is L-threonyl-[protein] + ATP = 3-O-(5'-adenylyl)-L-threonyl-[protein] + diphosphate. It catalyses the reaction L-tyrosyl-[protein] + ATP = O-(5'-adenylyl)-L-tyrosyl-[protein] + diphosphate. The enzyme catalyses L-histidyl-[protein] + UTP = N(tele)-(5'-uridylyl)-L-histidyl-[protein] + diphosphate. It carries out the reaction L-seryl-[protein] + UTP = O-(5'-uridylyl)-L-seryl-[protein] + diphosphate. The catalysed reaction is L-tyrosyl-[protein] + UTP = O-(5'-uridylyl)-L-tyrosyl-[protein] + diphosphate. Its function is as follows. Nucleotidyltransferase involved in the post-translational modification of proteins. It can catalyze the addition of adenosine monophosphate (AMP) or uridine monophosphate (UMP) to a protein, resulting in modifications known as AMPylation and UMPylation. The sequence is that of Protein nucleotidyltransferase YdiU from Pelagibacter ubique (strain HTCC1062).